Reading from the N-terminus, the 788-residue chain is MITVVKRNGRIEPLDITKIQKYTKDATDNLEGVSQSELEVDARLQFRDKITTEEIQQTLIKTAVDKIDIDTPNWSFVASRLFLYDLYHKVSGFTGYRHLKEYFENAEEKGRILKGFKEKFDLEFLNSQIKPERDFQFNYLGIKTLYDRYLLKDANNNPIELPQHMFMSIAMFLAQNEQEPNKIALEFYEVLSKFEAMCATPTLANARTTKHQLSSCYIGSTPDNIEGIFDSYKEMALLSKYGGGIGWDFSLVRSIGSYIDGHKNASAGTIPFLKIANDVAIAVDQLGTRKGAIAVYLEIWHIDVMEFIDLRKNSGDERRRAHDLFPALWVCDLFLKRVLEDAMWTLFDPYECKDLTELYGQDFEKRYLEYEKDPKIIKEYINAKDLWKKILMNYFEAGLPFLAFKDNANRCNPNAHAGIIRSSNLCTEIFQNTAPNHYYMQIEYTDGTIEFFEEKELVTTDSNITKCANKLTSTDILKGKPIYIATKVAKDGQTAVCNLASINLSKINTEEDIKRVVPIMVRLLDNVIDLNFYPNRKVKATNLQNRAIGLGVMGEAQMLAEHQIAWGSKEHLEKIDALMEQISYHAIDTSANLAKEKGVYKDFENSEWSKGIFPIDKANNEALKLTEKGLFNHACDWQGLREKVKANGMRNGYLMAIAPTSSISILVGTTQTIEPIYKKKWFEENLSGLIPVVVPNLNVETWNFYTSAYDIDAKDLIKAAAVRQKWIDQGQSLNVFLRIENASGKTLHDIYTLAWKLGLKSTYYLRSESPSIDEKSVLDRSVECFNCQ.

One can recognise an ATP-cone domain in the interval 2–92 (ITVVKRNGRI…LYDLYHKVSG (91 aa)). ATP-binding positions include lysine 6, 12–18 (EPLDITK), and threonine 52. Threonine 200 contributes to the GDP binding site. The cysteines at positions 216 and 497 are disulfide-linked. DTTP is bound by residues 223 to 225 (DNI) and arginine 253. Asparagine 424 is a GDP binding site. Residue asparagine 424 is the Proton acceptor of the active site. Residue cysteine 426 is the Cysteine radical intermediate of the active site. Residues glutamate 428 and 661-663 (SSI) each bind GDP. Catalysis depends on glutamate 428, which acts as the Proton acceptor.

It belongs to the ribonucleoside diphosphate reductase large chain family. In terms of assembly, tetramer of two alpha and two beta subunits.

The enzyme catalyses a 2'-deoxyribonucleoside 5'-diphosphate + [thioredoxin]-disulfide + H2O = a ribonucleoside 5'-diphosphate + [thioredoxin]-dithiol. Under complex allosteric control mediated by deoxynucleoside triphosphates and ATP binding to separate specificity and activation sites on the alpha subunit. The type of nucleotide bound at the specificity site determines substrate preference. It seems probable that ATP makes the enzyme reduce CDP and UDP, dGTP favors ADP reduction and dTTP favors GDP reduction. Stimulated by ATP and inhibited by dATP binding to the activity site. In terms of biological role, provides the precursors necessary for DNA synthesis. Catalyzes the biosynthesis of deoxyribonucleotides from the corresponding ribonucleotides. The polypeptide is Ribonucleoside-diphosphate reductase subunit alpha (nrdA) (Helicobacter pylori (strain ATCC 700392 / 26695) (Campylobacter pylori)).